An 898-amino-acid chain; its full sequence is Phosphoenolpyruvate carboxylase (898 aa).

Residues H138 and K561 contribute to the active site.

It belongs to the PEPCase type 1 family. Mg(2+) is required as a cofactor.

It catalyses the reaction oxaloacetate + phosphate = phosphoenolpyruvate + hydrogencarbonate. In terms of biological role, forms oxaloacetate, a four-carbon dicarboxylic acid source for the tricarboxylic acid cycle. This is Phosphoenolpyruvate carboxylase from Streptococcus suis (strain 98HAH33).